The primary structure comprises 311 residues: Methionyl-tRNA formyltransferase (311 aa).

Residue serine 109–proline 112 participates in (6S)-5,6,7,8-tetrahydrofolate binding.

It belongs to the Fmt family.

It catalyses the reaction L-methionyl-tRNA(fMet) + (6R)-10-formyltetrahydrofolate = N-formyl-L-methionyl-tRNA(fMet) + (6S)-5,6,7,8-tetrahydrofolate + H(+). Its function is as follows. Attaches a formyl group to the free amino group of methionyl-tRNA(fMet). The formyl group appears to play a dual role in the initiator identity of N-formylmethionyl-tRNA by promoting its recognition by IF2 and preventing the misappropriation of this tRNA by the elongation apparatus. This chain is Methionyl-tRNA formyltransferase, found in Staphylococcus aureus (strain JH1).